Reading from the N-terminus, the 261-residue chain is Probable RNA-binding protein ARP1 (261 aa).

Residues 17–94 (TKVFVGGLAW…RRANCNLASL (78 aa)) enclose the RRM domain. The disordered stretch occupies residues 96-122 (GRLRKSPTMTSPQQGPKNGNRATPPHV). The segment covering 102 to 116 (PTMTSPQQGPKNGNR) has biased composition (polar residues).

Expressed in vasculature of leaves, roots and siliques.

It localises to the nucleus. In terms of biological role, probable RNA-binding protein involved in the regulation of abscisic acid (ABA) response during seed germination. May regulate transcript levels of several germination-responsive genes under ABA. The polypeptide is Probable RNA-binding protein ARP1 (Arabidopsis thaliana (Mouse-ear cress)).